Consider the following 361-residue polypeptide: Ribosomal RNA large subunit methyltransferase M (361 aa).

S-adenosyl-L-methionine-binding positions include Ser-193, 226-229, Asp-245, Asp-265, and Asp-283; that span reads CPGG. Lys-312 acts as the Proton acceptor in catalysis.

Belongs to the class I-like SAM-binding methyltransferase superfamily. RNA methyltransferase RlmE family. RlmM subfamily. As to quaternary structure, monomer.

It localises to the cytoplasm. It catalyses the reaction cytidine(2498) in 23S rRNA + S-adenosyl-L-methionine = 2'-O-methylcytidine(2498) in 23S rRNA + S-adenosyl-L-homocysteine + H(+). In terms of biological role, catalyzes the 2'-O-methylation at nucleotide C2498 in 23S rRNA. This chain is Ribosomal RNA large subunit methyltransferase M, found in Histophilus somni (strain 2336) (Haemophilus somnus).